The sequence spans 426 residues: Histidine--tRNA ligase (426 aa).

Belongs to the class-II aminoacyl-tRNA synthetase family. As to quaternary structure, homodimer.

It is found in the cytoplasm. The enzyme catalyses tRNA(His) + L-histidine + ATP = L-histidyl-tRNA(His) + AMP + diphosphate + H(+). The polypeptide is Histidine--tRNA ligase (Geobacillus thermodenitrificans (strain NG80-2)).